A 465-amino-acid polypeptide reads, in one-letter code: Glutamate--tRNA ligase (465 aa).

The 'HIGH' region signature appears at 11-21 (PSPTGYLHIGG). The short motif at 243-247 (KLSKR) is the 'KMSKS' region element. Position 246 (K246) interacts with ATP.

It belongs to the class-I aminoacyl-tRNA synthetase family. Glutamate--tRNA ligase type 1 subfamily. In terms of assembly, monomer.

The protein resides in the cytoplasm. It catalyses the reaction tRNA(Glu) + L-glutamate + ATP = L-glutamyl-tRNA(Glu) + AMP + diphosphate. Catalyzes the attachment of glutamate to tRNA(Glu) in a two-step reaction: glutamate is first activated by ATP to form Glu-AMP and then transferred to the acceptor end of tRNA(Glu). The sequence is that of Glutamate--tRNA ligase from Aromatoleum aromaticum (strain DSM 19018 / LMG 30748 / EbN1) (Azoarcus sp. (strain EbN1)).